The chain runs to 122 residues: Large ribosomal subunit protein uL14 (122 aa).

This sequence belongs to the universal ribosomal protein uL14 family. In terms of assembly, part of the 50S ribosomal subunit. Forms a cluster with proteins L3 and L19. In the 70S ribosome, L14 and L19 interact and together make contacts with the 16S rRNA in bridges B5 and B8.

Its function is as follows. Binds to 23S rRNA. Forms part of two intersubunit bridges in the 70S ribosome. The protein is Large ribosomal subunit protein uL14 of Enterococcus faecalis (strain ATCC 700802 / V583).